The following is an 851-amino-acid chain: Molybdenum cofactor sulfurase (851 aa).

Lys249 is modified (N6-(pyridoxal phosphate)lysine). Cys413 is an active-site residue. Residues 665-844 (QYLRKFVMPG…LMVGDIVTPS (180 aa)) enclose the MOSC domain.

Belongs to the class-V pyridoxal-phosphate-dependent aminotransferase family. MOCOS subfamily. It depends on pyridoxal 5'-phosphate as a cofactor.

The enzyme catalyses Mo-molybdopterin + L-cysteine + AH2 = thio-Mo-molybdopterin + L-alanine + A + H2O. The protein operates within cofactor biosynthesis; molybdopterin biosynthesis. Sulfurates the molybdenum cofactor. Sulfation of molybdenum is essential for xanthine dehydrogenase (XDH) and aldehyde oxidase (ADO) enzymes in which molybdenum cofactor is liganded by 1 oxygen and 1 sulfur atom in active form. This is Molybdenum cofactor sulfurase from Neosartorya fischeri (strain ATCC 1020 / DSM 3700 / CBS 544.65 / FGSC A1164 / JCM 1740 / NRRL 181 / WB 181) (Aspergillus fischerianus).